Consider the following 100-residue polypeptide: Urease subunit gamma (100 aa).

This sequence belongs to the urease gamma subunit family. In terms of assembly, heterotrimer of UreA (gamma), UreB (beta) and UreC (alpha) subunits. Three heterotrimers associate to form the active enzyme.

It localises to the cytoplasm. It carries out the reaction urea + 2 H2O + H(+) = hydrogencarbonate + 2 NH4(+). The protein operates within nitrogen metabolism; urea degradation; CO(2) and NH(3) from urea (urease route): step 1/1. This Blochmanniella pennsylvanica (strain BPEN) protein is Urease subunit gamma.